Here is a 466-residue protein sequence, read N- to C-terminus: Cysteine--tRNA ligase (466 aa).

C27 lines the Zn(2+) pocket. Residues 29-39 carry the 'HIGH' region motif; sequence PTVYNFFHIGN. Zn(2+) contacts are provided by C207, H232, and E236. The 'KMSKS' region signature appears at 264–268; it reads KMSKS. Residue K267 coordinates ATP.

The protein belongs to the class-I aminoacyl-tRNA synthetase family. Monomer. It depends on Zn(2+) as a cofactor.

The protein localises to the cytoplasm. The enzyme catalyses tRNA(Cys) + L-cysteine + ATP = L-cysteinyl-tRNA(Cys) + AMP + diphosphate. This chain is Cysteine--tRNA ligase, found in Clostridium beijerinckii (strain ATCC 51743 / NCIMB 8052) (Clostridium acetobutylicum).